The sequence spans 187 residues: Elongation factor P (187 aa).

It belongs to the elongation factor P family.

The protein resides in the cytoplasm. It functions in the pathway protein biosynthesis; polypeptide chain elongation. Its function is as follows. Involved in peptide bond synthesis. Stimulates efficient translation and peptide-bond synthesis on native or reconstituted 70S ribosomes in vitro. Probably functions indirectly by altering the affinity of the ribosome for aminoacyl-tRNA, thus increasing their reactivity as acceptors for peptidyl transferase. This Mycobacterium ulcerans (strain Agy99) protein is Elongation factor P.